Reading from the N-terminus, the 1023-residue chain is 2-oxoglutarate dehydrogenase complex component E1 (1023 aa).

The transit peptide at 1 to 40 (MFHLRTCAAKLRPLTASQTVKTFSQNRPAAARTFGQIRCY) directs the protein to the mitochondrion. At lysine 74 the chain carries N6-succinyllysine. Position 100 is a phosphoserine (serine 100). The Ca(2+) site is built by histidine 143, aspartate 156, and aspartate 158. Arginine 312 contributes to the thiamine diphosphate binding site. An N6-acetyllysine modification is found at lysine 401. Thiamine diphosphate-binding residues include aspartate 411, asparagine 444, and isoleucine 446. Aspartate 411, asparagine 444, and isoleucine 446 together coordinate Mg(2+). A Glycyl lysine isopeptide (Lys-Gly) (interchain with G-Cter in ubiquitin) cross-link involves residue lysine 534. Lysine 564 bears the N6-succinyllysine mark. Glutamine 676 is a thiamine diphosphate binding site. Lysine 970 is subject to N6-acetyllysine.

The protein belongs to the alpha-ketoglutarate dehydrogenase family. In terms of assembly, homodimer. The 2-oxoglutarate dehydrogenase complex is composed of OGDH (2-oxoglutarate dehydrogenase; E1), DLST (dihydrolipoamide succinyltransferase; E2), DLD (dihydrolipoamide dehydrogenase; E3) and the assembly factor KGD4. It contains multiple copies of the three enzymatic components (E1, E2 and E3). In the nucleus, the 2-oxoglutarate dehydrogenase complex associates with KAT2A. Interacts with ABHD11; this interaction maintains the functional lipoylation of the 2-oxoglutarate dehydrogenase complex. The cofactor is thiamine diphosphate. Mg(2+) is required as a cofactor.

It localises to the mitochondrion. It is found in the nucleus. It catalyses the reaction N(6)-[(R)-lipoyl]-L-lysyl-[protein] + 2-oxoglutarate + H(+) = N(6)-[(R)-S(8)-succinyldihydrolipoyl]-L-lysyl-[protein] + CO2. Its activity is regulated as follows. Calcium ions and ADP stimulate, whereas ATP and NADH reduce catalytic activity. In terms of biological role, 2-oxoglutarate dehydrogenase (E1o) component of the 2-oxoglutarate dehydrogenase complex (OGDHC). Participates in the first step, rate limiting for the overall conversion of 2-oxoglutarate to succinyl-CoA and CO(2) catalyzed by the whole OGDHC. Catalyzes the irreversible decarboxylation of 2-oxoglutarate (alpha-ketoglutarate) via the thiamine diphosphate (ThDP) cofactor and subsequent transfer of the decarboxylated acyl intermediate on an oxidized dihydrolipoyl group that is covalently amidated to the E2 enzyme (dihydrolipoyllysine-residue succinyltransferase or DLST). Plays a key role in the Krebs (citric acid) cycle, which is a common pathway for oxidation of fuel molecules, including carbohydrates, fatty acids, and amino acids. Can catalyze the decarboxylation of 2-oxoadipate in vitro, but at a much lower rate than 2-oxoglutarate. Mainly active in the mitochondrion. A fraction of the 2-oxoglutarate dehydrogenase complex also localizes in the nucleus and is required for lysine succinylation of histones: associates with KAT2A on chromatin and provides succinyl-CoA to histone succinyltransferase KAT2A. This is 2-oxoglutarate dehydrogenase complex component E1 from Bos taurus (Bovine).